A 359-amino-acid polypeptide reads, in one-letter code: Holliday junction branch migration complex subunit RuvB (359 aa).

Residues 1 to 10 (MPEHDPHQEN) are compositionally biased toward basic and acidic residues. The disordered stretch occupies residues 1 to 20 (MPEHDPHQENRTVSSVRLED). The segment at 4-188 (HDPHQENRTV…FGIPLRLIFY (185 aa)) is large ATPase domain (RuvB-L). Residues leucine 27, arginine 28, glycine 69, lysine 72, threonine 73, threonine 74, 135–137 (EDF), arginine 178, tyrosine 188, and arginine 225 contribute to the ATP site. Mg(2+) is bound at residue threonine 73. The segment at 189–259 (TASELELIVS…TADAALQRLE (71 aa)) is small ATPAse domain (RuvB-S). The tract at residues 262 to 359 (SLGLDAMDRR…LLHRDGSADE (98 aa)) is head domain (RuvB-H). DNA contacts are provided by arginine 298, arginine 317, and arginine 322.

This sequence belongs to the RuvB family. As to quaternary structure, homohexamer. Forms an RuvA(8)-RuvB(12)-Holliday junction (HJ) complex. HJ DNA is sandwiched between 2 RuvA tetramers; dsDNA enters through RuvA and exits via RuvB. An RuvB hexamer assembles on each DNA strand where it exits the tetramer. Each RuvB hexamer is contacted by two RuvA subunits (via domain III) on 2 adjacent RuvB subunits; this complex drives branch migration. In the full resolvosome a probable DNA-RuvA(4)-RuvB(12)-RuvC(2) complex forms which resolves the HJ.

The protein localises to the cytoplasm. The catalysed reaction is ATP + H2O = ADP + phosphate + H(+). Its function is as follows. The RuvA-RuvB-RuvC complex processes Holliday junction (HJ) DNA during genetic recombination and DNA repair, while the RuvA-RuvB complex plays an important role in the rescue of blocked DNA replication forks via replication fork reversal (RFR). RuvA specifically binds to HJ cruciform DNA, conferring on it an open structure. The RuvB hexamer acts as an ATP-dependent pump, pulling dsDNA into and through the RuvAB complex. RuvB forms 2 homohexamers on either side of HJ DNA bound by 1 or 2 RuvA tetramers; 4 subunits per hexamer contact DNA at a time. Coordinated motions by a converter formed by DNA-disengaged RuvB subunits stimulates ATP hydrolysis and nucleotide exchange. Immobilization of the converter enables RuvB to convert the ATP-contained energy into a lever motion, pulling 2 nucleotides of DNA out of the RuvA tetramer per ATP hydrolyzed, thus driving DNA branch migration. The RuvB motors rotate together with the DNA substrate, which together with the progressing nucleotide cycle form the mechanistic basis for DNA recombination by continuous HJ branch migration. Branch migration allows RuvC to scan DNA until it finds its consensus sequence, where it cleaves and resolves cruciform DNA. In Granulibacter bethesdensis (strain ATCC BAA-1260 / CGDNIH1), this protein is Holliday junction branch migration complex subunit RuvB.